The sequence spans 123 residues: Large ribosomal subunit protein bL21 (123 aa).

It belongs to the bacterial ribosomal protein bL21 family. Part of the 50S ribosomal subunit. Contacts protein L20.

Functionally, this protein binds to 23S rRNA in the presence of protein L20. This is Large ribosomal subunit protein bL21 from Rippkaea orientalis (strain PCC 8801 / RF-1) (Cyanothece sp. (strain PCC 8801)).